We begin with the raw amino-acid sequence, 347 residues long: UDP-3-O-acylglucosamine N-acyltransferase (347 aa).

His-242 functions as the Proton acceptor in the catalytic mechanism.

The protein belongs to the transferase hexapeptide repeat family. LpxD subfamily. Homotrimer.

The enzyme catalyses a UDP-3-O-[(3R)-3-hydroxyacyl]-alpha-D-glucosamine + a (3R)-hydroxyacyl-[ACP] = a UDP-2-N,3-O-bis[(3R)-3-hydroxyacyl]-alpha-D-glucosamine + holo-[ACP] + H(+). It participates in bacterial outer membrane biogenesis; LPS lipid A biosynthesis. Functionally, catalyzes the N-acylation of UDP-3-O-acylglucosamine using 3-hydroxyacyl-ACP as the acyl donor. Is involved in the biosynthesis of lipid A, a phosphorylated glycolipid that anchors the lipopolysaccharide to the outer membrane of the cell. The protein is UDP-3-O-acylglucosamine N-acyltransferase of Dechloromonas aromatica (strain RCB).